The chain runs to 948 residues: Putative JmjC domain-containing histone demethylation protein 1 (948 aa).

The 160-residue stretch at 243-402 folds into the JmjC domain; sequence VSTTKLAYYV…PQLSIYNLEL (160 aa). Position 294 (Thr-294) interacts with substrate. Fe cation contacts are provided by His-297 and Glu-299. A substrate-binding site is contributed by Lys-314.

The protein belongs to the JHDM1 histone demethylase family. Fe(2+) serves as cofactor.

Its subcellular location is the nucleus. It catalyses the reaction N(6),N(6)-dimethyl-L-lysyl(36)-[histone H3] + 2 2-oxoglutarate + 2 O2 = L-lysyl(36)-[histone H3] + 2 formaldehyde + 2 succinate + 2 CO2. Functionally, may be a histone demethylase that specifically demethylates 'Lys-36' of histone H3, thereby playing a central role in histone code. Represses transcriptional silencing by negatively affecting heterochromatin stability. In Schizosaccharomyces pombe (strain 972 / ATCC 24843) (Fission yeast), this protein is Putative JmjC domain-containing histone demethylation protein 1 (jhd1).